The following is a 288-amino-acid chain: Protein sprouty homolog 3 (288 aa).

The SPR domain maps to 154-260 (KCVPCTAARP…GYDSLRRPGC (107 aa)).

Belongs to the sprouty family. As to quaternary structure, interacts with TESK1. Interacts with USP11. Interacts with CAV1 (via C-terminus). In terms of tissue distribution, widely expressed; particularly in the fetal tissues. Expressed in the brain with expression the highest in Purkinje cells in the cerebellum (at protein level). Expressed in the myocardium of the heart.

The protein resides in the cytoplasm. In terms of biological role, inhibits neurite branching, arbor length and neurite complexity. Inhibits EGF-mediated p42/44 ERK signaling. Negatively regulates the MAPK cascade, resulting in a reduction of extracellular matrix protein accumulation. May function as an antagonist of fibroblast growth factor (FGF) pathways and may negatively modulate respiratory organogenesis. This is Protein sprouty homolog 3 from Homo sapiens (Human).